The primary structure comprises 427 residues: Homoprotocatechuate catabolism bifunctional isomerase/decarboxylase (427 aa).

Approximate repeat units lie at residues 1–202 and 203–405; these read MKGT…LENP and VVDE…VGDE. Residues Glu276, Glu278, and Asp307 each contribute to the a divalent metal cation site.

Belongs to the FAH family. In terms of assembly, monomer. Mg(2+) is required as a cofactor.

The catalysed reaction is (2E,4Z)-5-hydroxypenta-2,4-diene-1,2,5-tricarboxylate = (3E,5R)-5-carboxy-2-oxohept-3-enedioate. It carries out the reaction (3E,5R)-5-carboxy-2-oxohept-3-enedioate + H(+) = (4Z)-2-oxohept-4-enedioate + CO2. Its pathway is aromatic compound metabolism; 4-hydroxyphenylacetate degradation; pyruvate and succinate semialdehyde from 4-hydroxyphenylacetate: step 4/7. It participates in aromatic compound metabolism; 4-hydroxyphenylacetate degradation; pyruvate and succinate semialdehyde from 4-hydroxyphenylacetate: step 5/7. Functionally, decarboxylates OPET (5-oxo-pent-3-ene-1,2,5-tricarboxylic acid) into HHDD (2-hydroxy-hept-2,4-diene-1,7-dioate) and isomerizes it to OHED (2-oxo-hept-3-ene-1,7-dioate). In Escherichia coli, this protein is Homoprotocatechuate catabolism bifunctional isomerase/decarboxylase (hpcE).